A 197-amino-acid polypeptide reads, in one-letter code: Putative glutathione-dependent formaldehyde-activating enzyme (197 aa).

The region spanning 22–171 (FPGGKLYCHC…LKSLGLENYD (150 aa)) is the CENP-V/GFA domain. C29, C31, C50, C52, C55, C97, and C100 together coordinate Zn(2+).

The protein belongs to the Gfa family. Zn(2+) is required as a cofactor.

The catalysed reaction is S-(hydroxymethyl)glutathione = glutathione + formaldehyde. Its pathway is one-carbon metabolism; formaldehyde degradation; formate from formaldehyde (glutathione route): step 1/3. Catalyzes the condensation of formaldehyde and glutathione to S-hydroxymethylglutathione. In Emericella nidulans (strain FGSC A4 / ATCC 38163 / CBS 112.46 / NRRL 194 / M139) (Aspergillus nidulans), this protein is Putative glutathione-dependent formaldehyde-activating enzyme.